The following is a 231-amino-acid chain: Potassium/proton antiporter CemA (231 aa).

A run of 4 helical transmembrane segments spans residues 7 to 27 (FIPLLCLTSIVFLPWCISFTF), 104 to 124 (IHTILHFCTNIICFLILSVYS), 154 to 174 (ILFLIEFCVGYHSTGGWELMI), and 189 to 209 (IISFLVSILPAILDTIFKYWI).

It belongs to the CemA family.

Its subcellular location is the plastid. It localises to the chloroplast inner membrane. It carries out the reaction K(+)(in) + H(+)(out) = K(+)(out) + H(+)(in). In terms of biological role, contributes to K(+)/H(+) antiport activity by supporting proton efflux to control proton extrusion and homeostasis in chloroplasts in a light-dependent manner to modulate photosynthesis. Prevents excessive induction of non-photochemical quenching (NPQ) under continuous-light conditions. Indirectly promotes efficient inorganic carbon uptake into chloroplasts. This Pisum sativum (Garden pea) protein is Potassium/proton antiporter CemA.